The following is a 63-amino-acid chain: DNA gyrase inhibitor YacG (63 aa).

Cys-9, Cys-12, Cys-28, and Cys-32 together coordinate Zn(2+).

The protein belongs to the DNA gyrase inhibitor YacG family. Interacts with GyrB. It depends on Zn(2+) as a cofactor.

Inhibits all the catalytic activities of DNA gyrase by preventing its interaction with DNA. Acts by binding directly to the C-terminal domain of GyrB, which probably disrupts DNA binding by the gyrase. The chain is DNA gyrase inhibitor YacG from Salmonella paratyphi A (strain AKU_12601).